The chain runs to 154 residues: Endoribonuclease YbeY (154 aa).

Positions 113, 117, and 123 each coordinate Zn(2+).

The protein belongs to the endoribonuclease YbeY family. Zn(2+) is required as a cofactor.

Its subcellular location is the cytoplasm. Its function is as follows. Single strand-specific metallo-endoribonuclease involved in late-stage 70S ribosome quality control and in maturation of the 3' terminus of the 16S rRNA. This is Endoribonuclease YbeY from Vibrio campbellii (strain ATCC BAA-1116).